The sequence spans 131 residues: Increased copper sensitivity protein 3 (131 aa).

2 helical membrane-spanning segments follow: residues 35–55 and 74–94; these read ISVL…IFFS and IALT…IIAF.

It is found in the membrane. The protein is Increased copper sensitivity protein 3 (ICS3) of Saccharomyces cerevisiae (strain ATCC 204508 / S288c) (Baker's yeast).